Consider the following 308-residue polypeptide: Neurexophilin-4 (308 aa).

A signal peptide spans 1 to 23; it reads MRLLPEWFLLLFGPWLLRKAVSA. The segment at 24 to 84 is II; that stretch reads QIPESGRPQY…GALARAGAAG (61 aa). Positions 40–51 are enriched in low complexity; it reads AAGAGAPGQQLP. The interval 40 to 59 is disordered; sequence AAGAGAPGQQLPEPRSSDGL. Asparagine 72, asparagine 133, asparagine 143, and asparagine 149 each carry an N-linked (GlcNAc...) asparagine glycan. The segment at 85 to 163 is III; that stretch reads ALPAQRTKRK…IVPPSKRVEF (79 aa). The IV (linker domain) stretch occupies residues 164 to 224; that stretch reads GGVWLPGPVP…PLGGALGVPG (61 aa). Residues 225–308 are v (Cys-rich); it reads AKESRAFNCH…NFQSEHPYFG (84 aa).

It belongs to the neurexophilin family. May be proteolytically processed at the boundary between the N-terminal non-conserved and the central conserved domain in neuron-like cells. Expressed in brain, spleen, and testis.

The protein localises to the secreted. May be signaling molecules that resemble neuropeptides and that act by binding to alpha-neurexins and possibly other receptors. This chain is Neurexophilin-4 (NXPH4), found in Homo sapiens (Human).